Here is a 778-residue protein sequence, read N- to C-terminus: Putative ATP-dependent RNA helicase MJ1505 (778 aa).

Positions 22–186 (IAANALKKKT…EICENLGIEH (165 aa)) constitute a Helicase ATP-binding domain. 35 to 42 (LSTGLGKT) is a binding site for ATP. Residues 137–140 (DEAH) carry the DEAH box motif. The 179-residue stretch at 338-516 (KVVDMVKNIL…EIKEETEEIK (179 aa)) folds into the Helicase C-terminal domain.

The protein belongs to the DEAD box helicase family. DEAH subfamily.

The enzyme catalyses ATP + H2O = ADP + phosphate + H(+). This Methanocaldococcus jannaschii (strain ATCC 43067 / DSM 2661 / JAL-1 / JCM 10045 / NBRC 100440) (Methanococcus jannaschii) protein is Putative ATP-dependent RNA helicase MJ1505.